We begin with the raw amino-acid sequence, 148 residues long: Small ribosomal subunit protein bS16 (148 aa).

Residues 111–122 (AAAGEEPVAEAT) show a composition bias toward low complexity. Residues 111 to 148 (AAAGEEPVAEATTPKKKGGKKAEAEDKAEEQKSEEGQA) are disordered. Residues 130-148 (KKAEAEDKAEEQKSEEGQA) are compositionally biased toward basic and acidic residues.

Belongs to the bacterial ribosomal protein bS16 family.

This is Small ribosomal subunit protein bS16 from Saccharopolyspora erythraea (strain ATCC 11635 / DSM 40517 / JCM 4748 / NBRC 13426 / NCIMB 8594 / NRRL 2338).